The primary structure comprises 863 residues: Leucine--tRNA ligase (863 aa).

Residues 40–51 carry the 'HIGH' region motif; it reads PYPSGAGLHVGH. Positions 635-639 match the 'KMSKS' region motif; that stretch reads KMSKS. K638 contributes to the ATP binding site.

The protein belongs to the class-I aminoacyl-tRNA synthetase family.

It is found in the cytoplasm. It catalyses the reaction tRNA(Leu) + L-leucine + ATP = L-leucyl-tRNA(Leu) + AMP + diphosphate. The sequence is that of Leucine--tRNA ligase from Leptospira interrogans serogroup Icterohaemorrhagiae serovar Lai (strain 56601).